Consider the following 393-residue polypeptide: Flap endonuclease 1 (393 aa).

An N-domain region spans residues 1–108 (MGILGLSKLL…SELQERRQRA (108 aa)). Mg(2+) is bound at residue Asp34. Arg74 is a binding site for DNA. Mg(2+)-binding residues include Asp90, Glu162, Glu164, Asp183, and Asp185. The I-domain stretch occupies residues 126–257 (LMEKMSKRTV…QKAWEGIKKH (132 aa)). Residue Glu162 participates in DNA binding. Residues Gly235 and Asp237 each coordinate DNA. Asp237 contacts Mg(2+). The interval 340–348 (TQGRLDQFF) is interaction with PCNA.

Belongs to the XPG/RAD2 endonuclease family. FEN1 subfamily. In terms of assembly, interacts with PCNA. Three molecules of FEN1 bind to one PCNA trimer with each molecule binding to one PCNA monomer. PCNA stimulates the nuclease activity without altering cleavage specificity. It depends on Mg(2+) as a cofactor. Phosphorylated. Phosphorylation upon DNA damage induces relocalization to the nuclear plasma.

It localises to the nucleus. It is found in the nucleolus. The protein resides in the nucleoplasm. The protein localises to the mitochondrion. Its function is as follows. Structure-specific nuclease with 5'-flap endonuclease and 5'-3' exonuclease activities involved in DNA replication and repair. During DNA replication, cleaves the 5'-overhanging flap structure that is generated by displacement synthesis when DNA polymerase encounters the 5'-end of a downstream Okazaki fragment. It enters the flap from the 5'-end and then tracks to cleave the flap base, leaving a nick for ligation. Also involved in the long patch base excision repair (LP-BER) pathway, by cleaving within the apurinic/apyrimidinic (AP) site-terminated flap. Acts as a genome stabilization factor that prevents flaps from equilibrating into structures that lead to duplications and deletions. Also possesses 5'-3' exonuclease activity on nicked or gapped double-stranded DNA, and exhibits RNase H activity. Also involved in replication and repair of rDNA and in repairing mitochondrial DNA. This is Flap endonuclease 1 from Trypanosoma cruzi (strain CL Brener).